We begin with the raw amino-acid sequence, 854 residues long: Protein translocase subunit SecA (854 aa).

ATP is bound by residues glutamine 89, 107–111 (GEGKT), and aspartate 501.

This sequence belongs to the SecA family. As to quaternary structure, monomer and homodimer. Part of the essential Sec protein translocation apparatus which comprises SecA, SecYEG and auxiliary proteins SecDF-YajC and YidC.

Its subcellular location is the cell inner membrane. The protein localises to the cytoplasm. The enzyme catalyses ATP + H2O + cellular proteinSide 1 = ADP + phosphate + cellular proteinSide 2.. Functionally, part of the Sec protein translocase complex. Interacts with the SecYEG preprotein conducting channel. Has a central role in coupling the hydrolysis of ATP to the transfer of proteins into and across the cell membrane, serving both as a receptor for the preprotein-SecB complex and as an ATP-driven molecular motor driving the stepwise translocation of polypeptide chains across the membrane. This is Protein translocase subunit SecA from Pelagibacter ubique (strain HTCC1062).